The chain runs to 346 residues: Very-long-chain 3-oxoacyl-CoA reductase (346 aa).

The helical transmembrane segment at 19-39 threads the bilayer; that stretch reads LIYGVLFVGVYKITTFTLSVG. The NADP(+) site is built by valine 65, aspartate 119, asparagine 146, tyrosine 220, lysine 224, valine 253, and serine 255. Residue tyrosine 220 is the Proton donor of the active site. Lysine 224 functions as the Lowers pKa of active site Tyr in the catalytic mechanism.

It belongs to the short-chain dehydrogenases/reductases (SDR) family.

The protein resides in the endoplasmic reticulum membrane. It carries out the reaction a very-long-chain (3R)-3-hydroxyacyl-CoA + NADP(+) = a very-long-chain 3-oxoacyl-CoA + NADPH + H(+). It participates in lipid metabolism; fatty acid biosynthesis. In terms of biological role, component of the microsomal membrane bound fatty acid elongation system, which produces the 26-carbon very long-chain fatty acids (VLCFA) from palmitate. Catalyzes the reduction of the 3-ketoacyl-CoA intermediate that is formed in each cycle of fatty acid elongation. VLCFAs serve as precursors for ceramide and sphingolipids. The chain is Very-long-chain 3-oxoacyl-CoA reductase from Debaryomyces hansenii (strain ATCC 36239 / CBS 767 / BCRC 21394 / JCM 1990 / NBRC 0083 / IGC 2968) (Yeast).